The chain runs to 1661 residues: Beta/gamma crystallin domain-containing protein 2 (1661 aa).

Disordered stretches follow at residues 72–135 (EEET…PPCV), 148–168 (PGPR…SSRS), 242–268 (VPAG…GLGS), 297–321 (PASA…GRAP), 337–380 (STEL…THPG), 411–757 (EHVT…EEDE), 808–871 (LGPW…VSCS), and 883–903 (TKGP…PTSR). A compositionally biased stretch (basic and acidic residues) spans 105–118 (PKEKRPEGRLKEAV). Residues 337-353 (STELPLQTSQGQASVPS) show a composition bias toward polar residues. Low complexity predominate over residues 431–442 (PSPGGLSAPSSP). Polar residues-rich tracts occupy residues 507-519 (SSPT…QGSS), 628-644 (PKST…SSIQ), and 685-697 (SEGS…TQKE). A compositionally biased stretch (low complexity) spans 706–719 (PAPSSSVDRVSPSP). Residues 731 to 750 (EASTESQLVSDPTEGKTCTE) are compositionally biased toward polar residues. The segment covering 825-835 (EKEEEEEEEPE) has biased composition (acidic residues). Residues 841–851 (DDEKLQRRQEK) are compositionally biased toward basic and acidic residues. Beta/gamma crystallin 'Greek key' domains follow at residues 986–1023 (GKVI…RVVR), 1024–1067 (GCWV…RRVV), 1073–1113 (PEIS…TVSA), 1114–1156 (GLWL…KPMR), 1168–1213 (PRAV…RVLG), 1214–1256 (GCWV…RVIR), 1262–1302 (PAVV…HVLS), 1303–1345 (GVWV…QPVL), 1356–1393 (SKIQ…RVHG), 1394–1437 (GSWI…QKVS), 1443–1483 (PSIF…RIKG), and 1484–1525 (GIWV…YPIK). The Ricin B-type lectin domain occupies 1569-1659 (WYYEDGLLKN…DRASQIWTIH (91 aa)).

The protein belongs to the beta/gamma-crystallin family.

The sequence is that of Beta/gamma crystallin domain-containing protein 2 from Homo sapiens (Human).